The chain runs to 1112 residues: DNA repair protein rad13 (1112 aa).

An N-domain region spans residues 1 to 95 (MGVSGLWDIL…QTIQKRQARR (95 aa)). D30 and D77 together coordinate Mg(2+). Residues 395 to 414 (TDDLILQLATQQSLEENKKS) form the UIM domain. Residues 742–870 (KRSEKRDADE…LALEILHEFP (129 aa)) form an I-domain region. Residues E777, E779, D798, D800, and D849 each coordinate Mg(2+). A disordered region spans residues 1056 to 1112 (KMMASKNSSDSDSDSEDNFLASLTPKTNSSSISIENLPRKTKLSTSLLKKPSKRRRK). Positions 1079–1089 (TPKTNSSSISI) are enriched in polar residues.

The protein belongs to the XPG/RAD2 endonuclease family. XPG subfamily. Requires Mg(2+) as cofactor.

It is found in the nucleus. Its function is as follows. Single-stranded DNA endonuclease involved in excision repair of DNA damaged with UV light, bulky adducts, or cross-linking agents. Essential for the incision step of excision-repair. The sequence is that of DNA repair protein rad13 (rad13) from Schizosaccharomyces pombe (strain 972 / ATCC 24843) (Fission yeast).